Here is a 79-residue protein sequence, read N- to C-terminus: Neurotoxin 3FTx-LI (79 aa).

Residues 1–21 (MKTLLLTLVVVTIVCLDLGYT) form the signal peptide. 4 disulfides stabilise this stretch: Cys24–Cys43, Cys36–Cys61, Cys65–Cys71, and Cys72–Cys77.

In terms of tissue distribution, expressed by the venom gland.

It is found in the secreted. Functionally, blocks both the muscle-twitch response to nerve stimulation and the response to exogenous acetylcholine. This chain is Neurotoxin 3FTx-LI, found in Bungarus fasciatus (Banded krait).